A 159-amino-acid chain; its full sequence is Large ribosomal subunit protein uL10 (159 aa).

This sequence belongs to the universal ribosomal protein uL10 family. Part of the ribosomal stalk of the 50S ribosomal subunit. The N-terminus interacts with L11 and the large rRNA to form the base of the stalk. The C-terminus forms an elongated spine to which L12 dimers bind in a sequential fashion forming a multimeric L10(L12)X complex.

In terms of biological role, forms part of the ribosomal stalk, playing a central role in the interaction of the ribosome with GTP-bound translation factors. This Campylobacter jejuni subsp. jejuni serotype O:2 (strain ATCC 700819 / NCTC 11168) protein is Large ribosomal subunit protein uL10 (rplJ).